Reading from the N-terminus, the 116-residue chain is Aspartate 1-decarboxylase (116 aa).

The active-site Schiff-base intermediate with substrate; via pyruvic acid is the S25. S25 is subject to Pyruvic acid (Ser). Substrate is bound at residue T57. Y58 functions as the Proton donor in the catalytic mechanism. Residue 73-75 (GPA) coordinates substrate.

The protein belongs to the PanD family. In terms of assembly, heterooctamer of four alpha and four beta subunits. It depends on pyruvate as a cofactor. Post-translationally, is synthesized initially as an inactive proenzyme, which is activated by self-cleavage at a specific serine bond to produce a beta-subunit with a hydroxyl group at its C-terminus and an alpha-subunit with a pyruvoyl group at its N-terminus.

Its subcellular location is the cytoplasm. It catalyses the reaction L-aspartate + H(+) = beta-alanine + CO2. It functions in the pathway cofactor biosynthesis; (R)-pantothenate biosynthesis; beta-alanine from L-aspartate: step 1/1. In terms of biological role, catalyzes the pyruvoyl-dependent decarboxylation of aspartate to produce beta-alanine. This Flavobacterium psychrophilum (strain ATCC 49511 / DSM 21280 / CIP 103535 / JIP02/86) protein is Aspartate 1-decarboxylase.